Here is a 745-residue protein sequence, read N- to C-terminus: MIVLFTLLRWAPISPVFSMRTMHANLAHRGIFLPVMIVTLPLPVHLRRRFPAQMVLMLQWFAFGMFSVLLIIPWLLCVYRLVTHSPGRTKRIKQVLDDRTAPKTVVVMPVYKEAPETLIRAIDSVVDCDYPANCIHVFLSYDGCLIDESYLRLIEHLGIPITLESYPQSIDVTYKDARITVSRFKHGGKRHCQKQTFRLIDMVYADYLERHDNLFVLFIDSDCILDRVCLQNFMYDMELKPGSKHDMLAMTGVITSTTDRGSLLTLLQDMEYVHGQLFERSVESSCGAVTCLPGALTMLRFSAFRKMAKYYFADKAEQCEDFFDYGKCHLGEDRWLTHLFMVGARKRYQIQMCAGAFCKTEAVQTFSSLLKQRRRWFLGFITNEVCMLTDVRLWKRYPLLCLVRFMQNTIRTTALLFFIIALSLITTSSSINDLPVGFIAISLGLNYVLMFYLGAKLKRYKAWLFPLMFILNPFFNWLYMVYGILTAGQRTWGGPRADAATADEHTSPEEAVELAKAQGDELNVDLTTFRSRGDEKSVPIHPSEKIDGRFSAPELPDGYDSNLNDSNAALTELMTPLPSVPRIGIHTYPSSDSILTSDSLSSIHLPLKVEELTGDNDNMKPYPDRQPRDTSSLHQMQRTCSNGIVASDSCSSQDDASEMVNKPEILSPSAHILPHPSQATESSSGEDIYPLHLPSPHQHEAHFAPLNASTRGSMEGNTPEVQRPRRKLPGIPRPIRAQKDPESMV.

5 helical membrane passes run 26-46 (LAHR…PVHL), 55-75 (VLML…IPWL), 412-432 (TTAL…SSIN), 434-454 (LPVG…FYLG), and 464-484 (LFPL…VYGI). Disordered stretches follow at residues 613-635 (TGDN…SLHQ) and 672-745 (ILPH…ESMV). The segment covering 707–720 (NASTRGSMEGNTPE) has biased composition (polar residues).

This sequence belongs to the chitin synthase family. Class VI subfamily.

The protein resides in the cell membrane. It carries out the reaction [(1-&gt;4)-N-acetyl-beta-D-glucosaminyl](n) + UDP-N-acetyl-alpha-D-glucosamine = [(1-&gt;4)-N-acetyl-beta-D-glucosaminyl](n+1) + UDP + H(+). Polymerizes chitin, a structural polymer of the cell wall and septum, by transferring the sugar moiety of UDP-GlcNAc to the non-reducing end of the growing chitin polymer. In Aspergillus fumigatus (strain ATCC MYA-4609 / CBS 101355 / FGSC A1100 / Af293) (Neosartorya fumigata), this protein is Chitin synthase D (chsD).